The sequence spans 233 residues: MAKLSKKAKAIAAAVDKNKLYTVAEAIALVREYATSKFDETIELAVNLGVDPRHADQMVRGVVTLPKGTGKNVRVGVFARGPKAEEAKAAGAEVVGAEDLMEAIQGGSIDFDRCIATPDMMGVVGRLGKILGPKGMMPNPKLGTVTMNVADAVKAAKGGQVEYRVDRTGIIHSGIGKASFSAEDIRANFDALIDALLKAKPAGAKGRYVKKVAISSTMGPGVSIDIADLPAAA.

The protein belongs to the universal ribosomal protein uL1 family. Part of the 50S ribosomal subunit.

Its function is as follows. Binds directly to 23S rRNA. The L1 stalk is quite mobile in the ribosome, and is involved in E site tRNA release. In terms of biological role, protein L1 is also a translational repressor protein, it controls the translation of the L11 operon by binding to its mRNA. The chain is Large ribosomal subunit protein uL1 from Zymomonas mobilis subsp. mobilis (strain ATCC 31821 / ZM4 / CP4).